We begin with the raw amino-acid sequence, 146 residues long: Hemoglobin subunit beta-1 (146 aa).

The Globin domain maps to K2–C146. 2 residues coordinate heme b: H63 and H92.

It belongs to the globin family. In terms of assembly, hb1 is a heterotetramer of two alpha-1 chains and two beta-1 chains; Hb2 is a heterotetramer of two alpha-2 chains and two beta-1 chains. As to expression, red blood cells.

In terms of biological role, involved in oxygen transport from gills to the various peripheral tissues. This Anarhichas minor (Arctic spotted wolffish) protein is Hemoglobin subunit beta-1 (hbb1).